The chain runs to 191 residues: Ribosome hibernation promotion factor (191 aa).

The segment at 100–123 (KQRQEGRPEPLPGPAEAEVNAQGS) is disordered.

Belongs to the HPF/YfiA ribosome-associated protein family. Long HPF subfamily. Interacts with 100S ribosomes.

It is found in the cytoplasm. Functionally, required for dimerization of active 70S ribosomes into 100S ribosomes in stationary phase; 100S ribosomes are translationally inactive and sometimes present during exponential growth. The polypeptide is Ribosome hibernation promotion factor (Deinococcus radiodurans (strain ATCC 13939 / DSM 20539 / JCM 16871 / CCUG 27074 / LMG 4051 / NBRC 15346 / NCIMB 9279 / VKM B-1422 / R1)).